Reading from the N-terminus, the 279-residue chain is Pleckstrin homology domain-containing family F member 1 (279 aa).

In terms of domain architecture, PH spans 35 to 131; the sequence is VLLGEGVLTK…WISHIEECVR (97 aa). The FYVE-type zinc finger occupies 152-212; the sequence is DKATDICMRC…VCSLCYRELA (61 aa). Residues cysteine 158, cysteine 161, cysteine 175, cysteine 178, cysteine 183, cysteine 186, cysteine 204, and cysteine 207 each contribute to the Zn(2+) site. The segment at 219-264 is disordered; the sequence is EAKERFRGSPGQLTHLGSTMCGASSGDDDDSDEDREGSGDGDWPTQ. Residues 244-253 show a composition bias toward acidic residues; sequence GDDDDSDEDR.

The protein localises to the nucleus. It is found in the cytoplasm. Its subcellular location is the perinuclear region. It localises to the lysosome. Functionally, may induce apoptosis through the lysosomal-mitochondrial pathway. Translocates to the lysosome initiating the permeabilization of lysosomal membrane (LMP) and resulting in the release of CTSD and CTSL to the cytoplasm. Triggers the caspase-independent apoptosis by altering mitochondrial membrane permeabilization (MMP) resulting in the release of PDCD8. The protein is Pleckstrin homology domain-containing family F member 1 (Plekhf1) of Rattus norvegicus (Rat).